The primary structure comprises 284 residues: Ribosomal RNA small subunit methyltransferase A (284 aa).

Positions 27, 29, 54, 75, 100, and 125 each coordinate S-adenosyl-L-methionine.

It belongs to the class I-like SAM-binding methyltransferase superfamily. rRNA adenine N(6)-methyltransferase family. RsmA subfamily.

It localises to the cytoplasm. It catalyses the reaction adenosine(1518)/adenosine(1519) in 16S rRNA + 4 S-adenosyl-L-methionine = N(6)-dimethyladenosine(1518)/N(6)-dimethyladenosine(1519) in 16S rRNA + 4 S-adenosyl-L-homocysteine + 4 H(+). Functionally, specifically dimethylates two adjacent adenosines (A1518 and A1519) in the loop of a conserved hairpin near the 3'-end of 16S rRNA in the 30S particle. May play a critical role in biogenesis of 30S subunits. The sequence is that of Ribosomal RNA small subunit methyltransferase A from Protochlamydia amoebophila (strain UWE25).